The following is a 256-amino-acid chain: 5-keto-4-deoxy-D-glucarate aldolase (256 aa).

His-50 functions as the Proton acceptor in the catalytic mechanism. Gln-151 serves as a coordination point for substrate. Glu-153 contributes to the Mg(2+) binding site. Substrate is bound by residues Ser-178 and Asp-179. Mg(2+) is bound at residue Asp-179.

Belongs to the HpcH/HpaI aldolase family. KDGluc aldolase subfamily. As to quaternary structure, homohexamer; trimer of dimers. The cofactor is Mg(2+).

The enzyme catalyses 5-dehydro-4-deoxy-D-glucarate = 2-hydroxy-3-oxopropanoate + pyruvate. It carries out the reaction 2-dehydro-3-deoxy-D-glucarate = 2-hydroxy-3-oxopropanoate + pyruvate. It functions in the pathway carbohydrate acid metabolism; galactarate degradation; D-glycerate from galactarate: step 2/3. Its function is as follows. Catalyzes the reversible retro-aldol cleavage of both 5-keto-4-deoxy-D-glucarate and 2-keto-3-deoxy-D-glucarate to pyruvate and tartronic semialdehyde. This Salmonella agona (strain SL483) protein is 5-keto-4-deoxy-D-glucarate aldolase.